A 261-amino-acid chain; its full sequence is uncharacterized protein (261 aa).

NADP(+) contacts are provided by Ile33, Lys60, Asp78, and Asn105. The Proton donor role is filled by Ser157. NADP(+) is bound by residues Tyr172, Lys176, and Thr206. Tyr172 functions as the Proton acceptor in the catalytic mechanism. Lys176 acts as the Lowers pKa of active site Tyr in catalysis.

This sequence belongs to the short-chain dehydrogenases/reductases (SDR) family.

The protein resides in the cytoplasm. The protein localises to the nucleus. This is an uncharacterized protein from Schizosaccharomyces pombe (strain 972 / ATCC 24843) (Fission yeast).